A 501-amino-acid chain; its full sequence is Cytochrome P450 2J5 (501 aa).

Cys447 provides a ligand contact to heme.

Belongs to the cytochrome P450 family. Heme is required as a cofactor.

The protein localises to the endoplasmic reticulum membrane. It is found in the microsome membrane. The enzyme catalyses an organic molecule + reduced [NADPH--hemoprotein reductase] + O2 = an alcohol + oxidized [NADPH--hemoprotein reductase] + H2O + H(+). This is Cytochrome P450 2J5 (Cyp2j5) from Mus musculus (Mouse).